The primary structure comprises 158 residues: MLSPKRTKYRKQQRGRMKGKATRGNRINFGEYGLVALEPAWITARQIEASRRAMARYVRRGGQIWIRIFPDKPVTQRPAETRMGSGKGNPEYWVCVVKPGRILFEMGGVPEATAREAMRLAAQKLPIKVKFVTKANFEEPEPVQKAAPETTEVAASAI.

Residues Met-1–Thr-22 form a disordered region.

The protein belongs to the universal ribosomal protein uL16 family. Part of the 50S ribosomal subunit.

Binds 23S rRNA and is also seen to make contacts with the A and possibly P site tRNAs. This chain is Large ribosomal subunit protein uL16, found in Synechococcus sp. (strain JA-3-3Ab) (Cyanobacteria bacterium Yellowstone A-Prime).